Consider the following 411-residue polypeptide: Serine hydroxymethyltransferase (411 aa).

(6S)-5,6,7,8-tetrahydrofolate is bound by residues Leu119 and 123-125 (GHL). Lys228 bears the N6-(pyridoxal phosphate)lysine mark.

The protein belongs to the SHMT family. As to quaternary structure, homodimer. It depends on pyridoxal 5'-phosphate as a cofactor.

The protein localises to the cytoplasm. The enzyme catalyses (6R)-5,10-methylene-5,6,7,8-tetrahydrofolate + glycine + H2O = (6S)-5,6,7,8-tetrahydrofolate + L-serine. The protein operates within one-carbon metabolism; tetrahydrofolate interconversion. It participates in amino-acid biosynthesis; glycine biosynthesis; glycine from L-serine: step 1/1. Catalyzes the reversible interconversion of serine and glycine with tetrahydrofolate (THF) serving as the one-carbon carrier. This reaction serves as the major source of one-carbon groups required for the biosynthesis of purines, thymidylate, methionine, and other important biomolecules. Also exhibits THF-independent aldolase activity toward beta-hydroxyamino acids, producing glycine and aldehydes, via a retro-aldol mechanism. This is Serine hydroxymethyltransferase from Clostridium kluyveri (strain NBRC 12016).